The sequence spans 273 residues: Phosphate import ATP-binding protein PstB (273 aa).

Residues 27 to 268 (VTVRDLNFYY…PSDRRTQDYI (242 aa)) form the ABC transporter domain. 59-66 (GPSGCGKS) lines the ATP pocket.

Belongs to the ABC transporter superfamily. Phosphate importer (TC 3.A.1.7) family. In terms of assembly, the complex is composed of two ATP-binding proteins (PstB), two transmembrane proteins (PstC and PstA) and a solute-binding protein (PstS).

The protein localises to the cell inner membrane. It catalyses the reaction phosphate(out) + ATP + H2O = ADP + 2 phosphate(in) + H(+). Its function is as follows. Part of the ABC transporter complex PstSACB involved in phosphate import. Responsible for energy coupling to the transport system. This chain is Phosphate import ATP-binding protein PstB, found in Rhodopseudomonas palustris (strain ATCC BAA-98 / CGA009).